A 521-amino-acid chain; its full sequence is 3,4-dihydroxyphenylacetaldehyde synthase (521 aa).

The residue at position 306 (Lys306) is an N6-(pyridoxal phosphate)lysine.

Belongs to the group II decarboxylase family. Pyridoxal 5'-phosphate is required as a cofactor. Highly expressed in the cuticle and midgut. Low expression in the head and thorax.

The enzyme catalyses L-dopa + O2 + H2O + H(+) = 3,4-dihydroxyphenylacetaldehyde + H2O2 + NH4(+) + CO2. Catalyzes the decarboxylation-oxidative deamination of L-3,4-dihydroxyphenylalanine (L-DOPA) to 3,4-dihydroxylphenylacetaldehyde (DHPAA). Involved in cuticle development. Probably responsible for the protein cross-linking during the development of flexible cuticles. The sequence is that of 3,4-dihydroxyphenylacetaldehyde synthase from Aedes aegypti (Yellowfever mosquito).